Reading from the N-terminus, the 541-residue chain is Chaperonin GroEL (541 aa).

ATP is bound by residues 30–33 (TLGP), K51, 87–91 (DGTTT), G415, 479–481 (NAA), and D495.

It belongs to the chaperonin (HSP60) family. In terms of assembly, forms a cylinder of 14 subunits composed of two heptameric rings stacked back-to-back. Interacts with the co-chaperonin GroES.

The protein resides in the cytoplasm. The enzyme catalyses ATP + H2O + a folded polypeptide = ADP + phosphate + an unfolded polypeptide.. In terms of biological role, together with its co-chaperonin GroES, plays an essential role in assisting protein folding. The GroEL-GroES system forms a nano-cage that allows encapsulation of the non-native substrate proteins and provides a physical environment optimized to promote and accelerate protein folding. In Acinetobacter baumannii (strain SDF), this protein is Chaperonin GroEL.